The primary structure comprises 138 residues: Translation initiation factor 2 subunit beta (138 aa).

It belongs to the eIF-2-beta/eIF-5 family. In terms of assembly, heterotrimer composed of an alpha, a beta and a gamma chain.

Functionally, eIF-2 functions in the early steps of protein synthesis by forming a ternary complex with GTP and initiator tRNA. This Methanococcus maripaludis (strain C5 / ATCC BAA-1333) protein is Translation initiation factor 2 subunit beta.